An 856-amino-acid polypeptide reads, in one-letter code: Translation initiation factor IF-2 (856 aa).

Disordered regions lie at residues 1-248 (MSDN…ARAR) and 254-273 (KRAR…QQKQ). Polar residues predominate over residues 22-38 (ETGQVKQSFSHGRSNTV). A compositionally biased stretch (pro residues) spans 83–93 (APRPAPAPIPT). Residues 100-150 (LERREQQERLLREAEEARMAALEETRRREERAKAEATEEERRRAEENRRAE) are compositionally biased toward basic and acidic residues. A compositionally biased stretch (low complexity) spans 156 to 196 (AAAAAAAAATAEAETAAAAPREEAPAAAGTAEEAPRTSSST). Residues 197–209 (MPPPRRFTPVPSP) show a composition bias toward pro residues. Over residues 210–229 (KRPEPPRPQQRDRKGDDRRQ) the composition is skewed to basic and acidic residues. A tr-type G domain is found at 356–526 (PRPPVVTIMG…ELQAELLELK (171 aa)). Positions 365 to 372 (GHVDHGKT) are G1. A GTP-binding site is contributed by 365 to 372 (GHVDHGKT). The G2 stretch occupies residues 390–394 (GITQH). Residues 412–415 (DTPG) form a G3 region. Residues 412-416 (DTPGH) and 466-469 (NKMD) contribute to the GTP site. Residues 466-469 (NKMD) form a G4 region. A G5 region spans residues 502–504 (SAL).

It belongs to the TRAFAC class translation factor GTPase superfamily. Classic translation factor GTPase family. IF-2 subfamily.

The protein resides in the cytoplasm. Functionally, one of the essential components for the initiation of protein synthesis. Protects formylmethionyl-tRNA from spontaneous hydrolysis and promotes its binding to the 30S ribosomal subunits. Also involved in the hydrolysis of GTP during the formation of the 70S ribosomal complex. This is Translation initiation factor IF-2 from Rhizorhabdus wittichii (strain DSM 6014 / CCUG 31198 / JCM 15750 / NBRC 105917 / EY 4224 / RW1) (Sphingomonas wittichii).